The chain runs to 147 residues: Cytochrome c-type biogenesis protein CcmE (147 aa).

Residues 1-7 are Cytoplasmic-facing; the sequence is MTRKQKR. The helical; Signal-anchor for type II membrane protein transmembrane segment at 8 to 28 threads the bilayer; it reads LSVIVGGLAFLGAATGLTFYA. At 29 to 147 the chain is on the periplasmic side; the sequence is LGQKASYFYM…KGVWQESKSE (119 aa). Residues histidine 122 and tyrosine 126 each contribute to the heme site.

The protein belongs to the CcmE/CycJ family.

It is found in the cell inner membrane. Functionally, heme chaperone required for the biogenesis of c-type cytochromes. Transiently binds heme delivered by CcmC and transfers the heme to apo-cytochromes in a process facilitated by CcmF and CcmH. This Mesorhizobium japonicum (strain LMG 29417 / CECT 9101 / MAFF 303099) (Mesorhizobium loti (strain MAFF 303099)) protein is Cytochrome c-type biogenesis protein CcmE.